The sequence spans 823 residues: Ubiquitin carboxyl-terminal hydrolase 16 (823 aa).

Residues 22-142 (PVCRHIRKGL…QVVDYVRKQA (121 aa)) form a UBP-type zinc finger. The Zn(2+) site is built by Cys-24, His-26, Cys-48, Cys-51, Cys-74, Cys-77, Cys-82, His-90, His-94, His-103, Cys-116, and Cys-119. Lys-140 is covalently cross-linked (Glycyl lysine isopeptide (Lys-Gly) (interchain with G-Cter in SUMO2)). Residues 146 to 189 (TPKPAEKDNGNIELENKKLEKESKNEQEREKKENMAKENPPMNS) are disordered. Residues 149–181 (PAEKDNGNIELENKKLEKESKNEQEREKKENMA) are compositionally biased toward basic and acidic residues. Residue Ser-189 is modified to Phosphoserine. Residues 196 to 822 (KGLSNLGNTC…QAYLLFYERI (627 aa)) form the USP domain. The active-site Nucleophile is Cys-205. Over residues 394–408 (SGKKSVNDKNLKKTV) the composition is skewed to basic and acidic residues. The interval 394 to 460 (SGKKSVNDKN…AKNQRRQQKI (67 aa)) is disordered. Over residues 409-420 (EDEDQDSEEEKD) the composition is skewed to acidic residues. The residue at position 415 (Ser-415) is a Phosphoserine. A compositionally biased stretch (basic and acidic residues) spans 421–430 (NDSYIKERSD). Residues 438–458 (HLQKKAKKQAKKQAKNQRRQQ) are compositionally biased toward basic residues. Ser-531 and Ser-552 each carry phosphoserine. Thr-554 carries the phosphothreonine modification. His-758 acts as the Proton acceptor in catalysis.

The protein belongs to the peptidase C19 family. USP16 subfamily. As to quaternary structure, homotetramer. Associates with late pre-40S ribosomes. Interacts with CEP78; promoting deubiquitination of tektins. Post-translationally, phosphorylated at the onset of mitosis and dephosphorylated during the metaphase/anaphase transition. Phosphorylation by AURKB enhances the deubiquitinase activity. As to expression, present in all the tissues examined including fetal brain, lung, liver, kidney, and adult heart, brain, placenta, lung, liver, skeletal muscle, kidney and pancreas.

It is found in the nucleus. The protein localises to the cytoplasm. It catalyses the reaction Thiol-dependent hydrolysis of ester, thioester, amide, peptide and isopeptide bonds formed by the C-terminal Gly of ubiquitin (a 76-residue protein attached to proteins as an intracellular targeting signal).. Functionally, specifically deubiquitinates 'Lys-120' of histone H2A (H2AK119Ub), a specific tag for epigenetic transcriptional repression, thereby acting as a coactivator. Deubiquitination of histone H2A is a prerequisite for subsequent phosphorylation at 'Ser-11' of histone H3 (H3S10ph), and is required for chromosome segregation when cells enter into mitosis. In resting B- and T-lymphocytes, phosphorylation by AURKB leads to enhance its activity, thereby maintaining transcription in resting lymphocytes. Regulates Hox gene expression via histone H2A deubiquitination. Prefers nucleosomal substrates. Does not deubiquitinate histone H2B. Also deubiquitinates non-histone proteins, such as ribosomal protein RPS27A: deubiquitination of monoubiquitinated RPS27A promotes maturation of the 40S ribosomal subunit. Also mediates deubiquitination of tektin proteins (TEKT1, TEKT2, TEK3, TEKT4 and TEKT5), promoting their stability. The polypeptide is Ubiquitin carboxyl-terminal hydrolase 16 (Homo sapiens (Human)).